Reading from the N-terminus, the 112-residue chain is UPF0342 protein SPP_1392 (112 aa).

Belongs to the UPF0342 family.

This Streptococcus pneumoniae (strain P1031) protein is UPF0342 protein SPP_1392.